The sequence spans 537 residues: 5,6-dihydroxyindole-2-carboxylic acid oxidase (537 aa).

Residues 1–24 form the signal peptide; it reads MKSPTLLSLGYMFLVLLFFQQAWA. The Lumenal, melanosome portion of the chain corresponds to 25–477; it reads QFPRECATIE…WPSRSFSISE (453 aa). 5 disulfides stabilise this stretch: Cys-30-Cys-41, Cys-42-Cys-65, Cys-56-Cys-99, Cys-101-Cys-110, and Cys-113-Cys-122. Asn-96 and Asn-104 each carry an N-linked (GlcNAc...) asparagine glycan. Asn-181 carries N-linked (GlcNAc...) asparagine glycosylation. Zn(2+) contacts are provided by His-192, His-215, and His-224. 2 disulfides stabilise this stretch: Cys-258–Cys-261 and Cys-290–Cys-303. 2 N-linked (GlcNAc...) asparagine glycosylation sites follow: Asn-304 and Asn-350. Residues His-377 and His-381 each coordinate Zn(2+). An N-linked (GlcNAc...) asparagine glycan is attached at Asn-385. Zn(2+) is bound at residue His-404. Residues 478-501 traverse the membrane as a helical segment; that stretch reads IVTIAVVAALSLVAVIFAGASCLI. Residues 502-537 lie on the Cytoplasmic side of the membrane; sequence RARSNMDEANQPLLTDQYQHYIEEYEKIHNPNQSVV.

This sequence belongs to the tyrosinase family. Monomer. Interacts with ATP7A. Interacts with SLC45A2. Cu(2+) serves as cofactor. The cofactor is Zn(2+). Glycosylated.

It localises to the melanosome membrane. It carries out the reaction 2 5,6-dihydroxyindole-2-carboxylate + O2 = 2 indole-5,6-quinone-2-carboxylate + 2 H2O. It participates in pigment biosynthesis; melanin biosynthesis. Functionally, plays a role in melanin biosynthesis. Catalyzes the oxidation of 5,6-dihydroxyindole-2-carboxylic acid (DHICA) into indole-5,6-quinone-2-carboxylic acid. May regulate or influence the type of melanin synthesized. Also to a lower extent, capable of hydroxylating tyrosine and producing melanin. This is 5,6-dihydroxyindole-2-carboxylic acid oxidase (TYRP1) from Bos taurus (Bovine).